The sequence spans 733 residues: Nuclear hormone receptor family member nhr-66 (733 aa).

Composition is skewed to low complexity over residues 113-130 (PAIP…SQAS) and 165-185 (QQNR…QQQN). The interval 113 to 190 (PAIPSSSSCS…AQQQNSMARK (78 aa)) is disordered. A DNA-binding region (nuclear receptor) is located at residues 266–343 (VPACAICGTD…SGMDKNSVQH (78 aa)). NR C4-type zinc fingers lie at residues 269 to 289 (CAIC…CAAC) and 305 to 326 (CNKG…CRAC). The segment at 361 to 396 (PDAEFEPSAKVSTVSEPSTSSGPSGGFNQNVSSPAG) is disordered. The span at 371–382 (VSTVSEPSTSSG) shows a compositional bias: low complexity. The NR LBD domain occupies 444–687 (CLGDWFRKPS…ACFNQMLDVE (244 aa)). The segment at 676–687 (ADACFNQMLDVE) is AF-2. Positions 691–733 (VSPDGQKDSEAEQGPSPVSVPEAARGSYQDDDMPPVLEKNCDL) are disordered.

This sequence belongs to the nuclear hormone receptor family. As to quaternary structure, interacts with nuclear hormone receptor nhr-49; the interaction is direct. Widely expressed, including in hypodermis, gut, muscle, and neuronal cells of the ventral nerve cord, head, and tail ganglia. Expressed in the head ganglion in several sensory and interneurons, including AVA.

It localises to the nucleus. Functionally, transcription factor. Binds to regulatory elements and regulates transcription of target genes, including the potassium channel accessory subunit mps-2. Negatively regulates transcription of mps-2, thereby modulating age-dependent memory decline. In concert with nuclear hormone receptor nhr-49, involved in regulating target genes with roles in sphingolipid breakdown and lipid remodeling. Plays a role in modulating mitochondrial morphology and function. The protein is Nuclear hormone receptor family member nhr-66 of Caenorhabditis elegans.